The primary structure comprises 625 residues: Cysteine-rich receptor-like protein kinase 46 (625 aa).

Residues 1-23 (MASTLISSLAVVLPLTLLAPSMS) form the signal peptide. Residues 24–252 (MKISRIDVLG…LLAMSFTKEN (229 aa)) lie on the Extracellular side of the membrane. Gnk2-homologous domains are found at residues 29-130 (IDVL…NYSF) and 135-237 (VSHQ…NYTF). 4 N-linked (GlcNAc...) asparagine glycosylation sites follow: Asn38, Asn127, Asn234, and Asn252. Residues 253–273 (LTYIFVISMVGVLAIAAGFWC) form a helical membrane-spanning segment. At 274-625 (GKCFYMRTSP…TKPPFLHDSM (352 aa)) the chain is on the cytoplasmic side. Residues 331-621 (FNESCKLGVG…LPTPTKPPFL (291 aa)) enclose the Protein kinase domain. ATP is bound by residues 337–345 (LGVGGYGEV) and Lys359. Tyr404 is modified (phosphotyrosine). Asp454 (proton acceptor) is an active-site residue. Ser458 carries the post-translational modification Phosphoserine. A Phosphothreonine modification is found at Thr499. Tyr507 is modified (phosphotyrosine).

Belongs to the protein kinase superfamily. Ser/Thr protein kinase family. CRK subfamily.

It localises to the membrane. It carries out the reaction L-seryl-[protein] + ATP = O-phospho-L-seryl-[protein] + ADP + H(+). It catalyses the reaction L-threonyl-[protein] + ATP = O-phospho-L-threonyl-[protein] + ADP + H(+). This Arabidopsis thaliana (Mouse-ear cress) protein is Cysteine-rich receptor-like protein kinase 46.